We begin with the raw amino-acid sequence, 215 residues long: Adenylate kinase (215 aa).

Gly10–Thr15 provides a ligand contact to ATP. The interval Ser30–Val59 is NMP. Residues Thr31, Arg36, Glu57–Val59, Gly85–Arg88, and Gln92 each bind AMP. The tract at residues Gly126–Asp163 is LID. Arg127 provides a ligand contact to ATP. Positions 130, 133, 150, and 153 each coordinate Zn(2+). Residues Arg160 and Arg171 each contribute to the AMP site. Gly199 provides a ligand contact to ATP.

This sequence belongs to the adenylate kinase family. As to quaternary structure, monomer.

It is found in the cytoplasm. The enzyme catalyses AMP + ATP = 2 ADP. Its pathway is purine metabolism; AMP biosynthesis via salvage pathway; AMP from ADP: step 1/1. Its function is as follows. Catalyzes the reversible transfer of the terminal phosphate group between ATP and AMP. Plays an important role in cellular energy homeostasis and in adenine nucleotide metabolism. The polypeptide is Adenylate kinase (Thermodesulfovibrio yellowstonii (strain ATCC 51303 / DSM 11347 / YP87)).